The chain runs to 1755 residues: Transposon Ty1-ML1 Gag-Pol polyprotein (1755 aa).

3 stretches are compositionally biased toward polar residues: residues 1 to 23, 48 to 60, and 127 to 152; these read MESQ…SVTS, TKAN…TPAS, and QSQF…GNTF. Disordered regions lie at residues 1 to 88, 126 to 173, and 352 to 421; these read MESQ…YPQQ, PQSQ…RPPP, and GSRN…SKST. Residues 153-165 show a composition bias toward low complexity; that stretch reads TDSSSADSDMTST. The segment at 299–401 is RNA-binding; it reads NNGIHINNKV…NSKSKTARAH (103 aa). Positions 402 to 418 are enriched in low complexity; sequence NVSTSNNSPSTDNDSIS. Asp-461 serves as the catalytic For protease activity; shared with dimeric partner. The segment at 583 to 640 is integrase-type zinc finger-like; the sequence is NVHTSESTRKYPYPFIHRMLAHANAQTIRYSLKNNTITYFNESDVDWSSAIDYQCPDC. Positions 660 to 835 constitute an Integrase catalytic domain; the sequence is NSYEPFQYLH…AGLDISTLLP (176 aa). Mg(2+) contacts are provided by Asp-671 and Asp-736. 3 disordered regions span residues 956–1087, 1092–1111, and 1130–1171; these read SKAV…ETEK, RSPS…NIVP, and DLPL…DSNA. Residues 960–969 are compositionally biased toward low complexity; it reads SPTDSTPPST. Residues 1005–1015 are compositionally biased toward polar residues; that stretch reads STPQISNIEST. The segment covering 1038–1053 has biased composition (basic and acidic residues); the sequence is ESSHASKSKDFRHSDS. 2 stretches are compositionally biased toward polar residues: residues 1054-1082 and 1101-1111; these read YSEN…QISD and PENNSSHNIVP. Positions 1178–1212 match the Bipartite nuclear localization signal motif; sequence KKRSLEDNETEIKVSRDTWNTKNMRSLEPPRSKKR. The Reverse transcriptase Ty1/copia-type domain maps to 1338-1476; it reads NNYYITQLDI…DILGLEIKYQ (139 aa). Positions 1346, 1427, 1428, 1610, 1652, and 1685 each coordinate Mg(2+). Residues 1610–1752 enclose the RNase H Ty1/copia-type domain; it reads DASYGNQPYY…IKTFKLLTNK (143 aa).

The capsid protein forms a homotrimer, from which the VLPs are assembled. The protease is a homodimer, whose active site consists of two apposed aspartic acid residues. Initially, virus-like particles (VLPs) are composed of the structural unprocessed proteins Gag and Gag-Pol, and also contain the host initiator methionine tRNA (tRNA(i)-Met) which serves as a primer for minus-strand DNA synthesis, and a dimer of genomic Ty RNA. Processing of the polyproteins occurs within the particle and proceeds by an ordered pathway, called maturation. First, the protease (PR) is released by autocatalytic cleavage of the Gag-Pol polyprotein yielding capsid protein p45 and a Pol-p154 precursor protein. This cleavage is a prerequisite for subsequent processing of Pol-p154 at the remaining sites to release the mature structural and catalytic proteins. Maturation takes place prior to the RT reaction and is required to produce transposition-competent VLPs.

The protein resides in the cytoplasm. The protein localises to the nucleus. The enzyme catalyses DNA(n) + a 2'-deoxyribonucleoside 5'-triphosphate = DNA(n+1) + diphosphate. It catalyses the reaction Endonucleolytic cleavage to 5'-phosphomonoester.. Functionally, capsid protein (CA) is the structural component of the virus-like particle (VLP), forming the shell that encapsulates the retrotransposons dimeric RNA genome. The particles are assembled from trimer-clustered units and there are holes in the capsid shells that allow for the diffusion of macromolecules. CA also has nucleocapsid-like chaperone activity, promoting primer tRNA(i)-Met annealing to the multipartite primer-binding site (PBS), dimerization of Ty1 RNA and initiation of reverse transcription. In terms of biological role, the aspartyl protease (PR) mediates the proteolytic cleavages of the Gag and Gag-Pol polyproteins after assembly of the VLP. Its function is as follows. Reverse transcriptase/ribonuclease H (RT) is a multifunctional enzyme that catalyzes the conversion of the retro-elements RNA genome into dsDNA within the VLP. The enzyme displays a DNA polymerase activity that can copy either DNA or RNA templates, and a ribonuclease H (RNase H) activity that cleaves the RNA strand of RNA-DNA heteroduplexes during plus-strand synthesis and hydrolyzes RNA primers. The conversion leads to a linear dsDNA copy of the retrotransposon that includes long terminal repeats (LTRs) at both ends. Integrase (IN) targets the VLP to the nucleus, where a subparticle preintegration complex (PIC) containing at least integrase and the newly synthesized dsDNA copy of the retrotransposon must transit the nuclear membrane. Once in the nucleus, integrase performs the integration of the dsDNA into the host genome. The protein is Transposon Ty1-ML1 Gag-Pol polyprotein (TY1B-ML1) of Saccharomyces cerevisiae (strain ATCC 204508 / S288c) (Baker's yeast).